The following is a 433-amino-acid chain: 4-hydroxy-3-methylbut-2-en-1-yl diphosphate synthase (flavodoxin) (433 aa).

[4Fe-4S] cluster is bound by residues Cys320, Cys323, Cys366, and Glu373.

The protein belongs to the IspG family. Requires [4Fe-4S] cluster as cofactor.

The enzyme catalyses (2E)-4-hydroxy-3-methylbut-2-enyl diphosphate + oxidized [flavodoxin] + H2O + 2 H(+) = 2-C-methyl-D-erythritol 2,4-cyclic diphosphate + reduced [flavodoxin]. It functions in the pathway isoprenoid biosynthesis; isopentenyl diphosphate biosynthesis via DXP pathway; isopentenyl diphosphate from 1-deoxy-D-xylulose 5-phosphate: step 5/6. In terms of biological role, converts 2C-methyl-D-erythritol 2,4-cyclodiphosphate (ME-2,4cPP) into 1-hydroxy-2-methyl-2-(E)-butenyl 4-diphosphate. This Beijerinckia indica subsp. indica (strain ATCC 9039 / DSM 1715 / NCIMB 8712) protein is 4-hydroxy-3-methylbut-2-en-1-yl diphosphate synthase (flavodoxin).